We begin with the raw amino-acid sequence, 383 residues long: Transposase InsI for insertion sequence element IS30A (383 aa).

The Integrase catalytic domain occupies 213-379 (VNGTPIHERS…TPKEIIERGV (167 aa)).

It belongs to the transposase IS30 family.

Functionally, required for the transposition of the insertion element. The protein is Transposase InsI for insertion sequence element IS30A (insI1) of Escherichia coli (strain K12).